A 307-amino-acid polypeptide reads, in one-letter code: 1-phosphofructokinase (307 aa).

ATP-binding positions include 217–222 (SMGSDG) and 249–250 (GD). D250 (proton acceptor) is an active-site residue.

The protein belongs to the carbohydrate kinase PfkB family.

The enzyme catalyses beta-D-fructose 1-phosphate + ATP = beta-D-fructose 1,6-bisphosphate + ADP + H(+). Catalyzes the ATP-dependent phosphorylation of fructose-l-phosphate to fructose-l,6-bisphosphate. The sequence is that of 1-phosphofructokinase (fruK) from Borreliella burgdorferi (strain ATCC 35210 / DSM 4680 / CIP 102532 / B31) (Borrelia burgdorferi).